A 256-amino-acid chain; its full sequence is Hemolymph lipopolysaccharide-binding protein (256 aa).

The N-terminal stretch at 1–21 is a signal peptide; sequence MMNTRALLPLSVLLMATLCLC. A propeptide spanning residues 22–33 is cleaved from the precursor; that stretch reads ELPIPILQRFVR. A glycan (N-linked (GlcNAc...) asparagine) is linked at Asn56. The region spanning 146 to 256 is the C-type lectin domain; sequence IICQQEGGHL…KLPFVCEVEL (111 aa). 2 disulfides stabilise this stretch: Cys148/Cys252 and Cys230/Cys244.

Hemolymph.

The protein resides in the secreted. Its function is as follows. Participates probably in the elimination of foreign substances invading the insect abdominal cavity, and in trapping intracellular symbionts, when they leak from the mycetomes into the hemolymph. The chain is Hemolymph lipopolysaccharide-binding protein from Periplaneta americana (American cockroach).